A 255-amino-acid polypeptide reads, in one-letter code: Leucyl/phenylalanyl-tRNA--protein transferase (255 aa).

The protein belongs to the L/F-transferase family.

The protein localises to the cytoplasm. It carries out the reaction N-terminal L-lysyl-[protein] + L-leucyl-tRNA(Leu) = N-terminal L-leucyl-L-lysyl-[protein] + tRNA(Leu) + H(+). It catalyses the reaction N-terminal L-arginyl-[protein] + L-leucyl-tRNA(Leu) = N-terminal L-leucyl-L-arginyl-[protein] + tRNA(Leu) + H(+). The catalysed reaction is L-phenylalanyl-tRNA(Phe) + an N-terminal L-alpha-aminoacyl-[protein] = an N-terminal L-phenylalanyl-L-alpha-aminoacyl-[protein] + tRNA(Phe). Functionally, functions in the N-end rule pathway of protein degradation where it conjugates Leu, Phe and, less efficiently, Met from aminoacyl-tRNAs to the N-termini of proteins containing an N-terminal arginine or lysine. In Burkholderia pseudomallei (strain 1106a), this protein is Leucyl/phenylalanyl-tRNA--protein transferase.